The following is a 79-amino-acid chain: MSNIEERVKKIVVEQLGVKEEEVTNSASFVEDLGADSLDTVELVMALEEEFETEIPDEEAEKITTVQQAIDYINAHAQG.

The Carrier domain maps to 2–77 (SNIEERVKKI…QAIDYINAHA (76 aa)). Residue Ser-37 is modified to O-(pantetheine 4'-phosphoryl)serine.

The protein belongs to the acyl carrier protein (ACP) family. Post-translationally, 4'-phosphopantetheine is transferred from CoA to a specific serine of apo-ACP by AcpS. This modification is essential for activity because fatty acids are bound in thioester linkage to the sulfhydryl of the prosthetic group.

Its subcellular location is the cytoplasm. It functions in the pathway lipid metabolism; fatty acid biosynthesis. Functionally, carrier of the growing fatty acid chain in fatty acid biosynthesis. The polypeptide is Acyl carrier protein (Thioalkalivibrio sulfidiphilus (strain HL-EbGR7)).